We begin with the raw amino-acid sequence, 139 residues long: Putative pre-16S rRNA nuclease (139 aa).

The protein belongs to the YqgF nuclease family.

It localises to the cytoplasm. Functionally, could be a nuclease involved in processing of the 5'-end of pre-16S rRNA. This Haemophilus influenzae (strain 86-028NP) protein is Putative pre-16S rRNA nuclease.